A 501-amino-acid chain; its full sequence is MPPVRFGPRKILEYDGRYGVLICHECRYAIQKSALQSHLLRHKIYRADRQQLVAMINELDLLEPDDVLLPPPESPPIDGLPVIAGYRCTAPGCANLCASLKRMKGHWRESHGIADASLARPAKLQTFFRGTKIRYFEVTPTTEDEDDEENESENDEEEGDVDLEEQEDDNGGRQSTTVTTSPGPSAPSVNVDLETLSYFHHFMSATSLTLPCPQDMQSGAQYWKEKAVPQALQQRWLMCGLLALAACHLAAFPDNAAAGQQHRKRAAEFSLEFRTGWRELADTSGEGLREVATEIECLLRCAHWALAESPCDQRIMPEPGVPEHLQSIISTIQSTVPAAAPHEAETSAYATRILRWNTSEAGNSVLAEIRNRLHDLPARMADTFGRPENIQDVLVLLSALAAMGECCDTSFASEEVGPAWWGMATWWTRVPLRFKELVARHYPASLVVVAHWAALMVNRTERCGCWLVKGLAMTILLRIAERLPEDDDGNVQRLVALTIAA.

Positions 137 to 189 (EVTPTTEDEDDEENESENDEEEGDVDLEEQEDDNGGRQSTTVTTSPGPSAPSV) are disordered. Positions 142 to 169 (TEDEDDEENESENDEEEGDVDLEEQEDD) are enriched in acidic residues. Over residues 172-183 (GRQSTTVTTSPG) the composition is skewed to polar residues.

Functionally, part of the gene cluster that mediates the biosynthesis of orsellinic acid, as well as of the cathepsin K inhibitors F9775 A and F9775 B. The non-reducing polyketide synthase orsA produces orsellinic acid by condensing acetyl-CoA with 3 malonyl-CoA units. Further modifications by the decarboxylase orsB and the tyrosinase-like protein orsC lead to the production of F9775 A and F9775 B. The functions of orsD and orsE remain unclear since only orsB and orsC are required to convert orsellinic acid into F9775 A and F9775 B. This chain is Orsellinic acid/F9775 biosynthesis cluster protein D, found in Emericella nidulans (strain FGSC A4 / ATCC 38163 / CBS 112.46 / NRRL 194 / M139) (Aspergillus nidulans).